A 434-amino-acid chain; its full sequence is Zinc finger and BTB domain-containing protein 8A (434 aa).

The region spanning 24 to 92 (CDCSILVEGK…VYSGKLSLTG (69 aa)) is the BTB domain. The segment at 134-238 (SLSDKDTGSN…SGNHVSQSEE (105 aa)) is disordered. Phosphoserine occurs at positions 161 and 167. Residues lysine 172, lysine 176, and lysine 193 each participate in a glycyl lysine isopeptide (Lys-Gly) (interchain with G-Cter in SUMO2) cross-link. The span at 192–202 (AKHEQRKEPSK) shows a compositional bias: basic and acidic residues. Residues 226-238 (QTDSGNHVSQSEE) are compositionally biased toward polar residues. C2H2-type zinc fingers lie at residues 275-297 (FKCP…LRCH) and 303-326 (YPCQ…RTIH). Lysine 430 is covalently cross-linked (Glycyl lysine isopeptide (Lys-Gly) (interchain with G-Cter in SUMO2)).

The protein resides in the nucleus. In terms of biological role, may be involved in transcriptional regulation. The chain is Zinc finger and BTB domain-containing protein 8A (Zbtb8a) from Mus musculus (Mouse).